Reading from the N-terminus, the 823-residue chain is Valine--tRNA ligase (823 aa).

The short motif at 52-62 (PTVSGVLHMGH) is the 'HIGH' region element. The 'KMSKS' region motif lies at 549 to 553 (KMSKS). Residue Lys552 coordinates ATP.

The protein belongs to the class-I aminoacyl-tRNA synthetase family. ValS type 2 subfamily. Monomer.

The protein localises to the cytoplasm. The enzyme catalyses tRNA(Val) + L-valine + ATP = L-valyl-tRNA(Val) + AMP + diphosphate. Its function is as follows. Catalyzes the attachment of valine to tRNA(Val). As ValRS can inadvertently accommodate and process structurally similar amino acids such as threonine, to avoid such errors, it has a 'posttransfer' editing activity that hydrolyzes mischarged Thr-tRNA(Val) in a tRNA-dependent manner. This is Valine--tRNA ligase from Anaplasma marginale (strain St. Maries).